The chain runs to 382 residues: Anhydro-N-acetylmuramic acid kinase (382 aa).

Residue 18 to 25 (GTSLDGVD) participates in ATP binding.

It belongs to the anhydro-N-acetylmuramic acid kinase family.

It carries out the reaction 1,6-anhydro-N-acetyl-beta-muramate + ATP + H2O = N-acetyl-D-muramate 6-phosphate + ADP + H(+). Its pathway is amino-sugar metabolism; 1,6-anhydro-N-acetylmuramate degradation. It participates in cell wall biogenesis; peptidoglycan recycling. Catalyzes the specific phosphorylation of 1,6-anhydro-N-acetylmuramic acid (anhMurNAc) with the simultaneous cleavage of the 1,6-anhydro ring, generating MurNAc-6-P. Is required for the utilization of anhMurNAc either imported from the medium or derived from its own cell wall murein, and thus plays a role in cell wall recycling. The polypeptide is Anhydro-N-acetylmuramic acid kinase (Ralstonia nicotianae (strain ATCC BAA-1114 / GMI1000) (Ralstonia solanacearum)).